The chain runs to 156 residues: ATP synthase subunit b 1 (156 aa).

Residues 7–29 traverse the membrane as a helical segment; it reads LLGQAISFALFVWFCMKYVWPPL.

Belongs to the ATPase B chain family. As to quaternary structure, F-type ATPases have 2 components, F(1) - the catalytic core - and F(0) - the membrane proton channel. F(1) has five subunits: alpha(3), beta(3), gamma(1), delta(1), epsilon(1). F(0) has three main subunits: a(1), b(2) and c(10-14). The alpha and beta chains form an alternating ring which encloses part of the gamma chain. F(1) is attached to F(0) by a central stalk formed by the gamma and epsilon chains, while a peripheral stalk is formed by the delta and b chains.

The protein localises to the cell inner membrane. Its function is as follows. F(1)F(0) ATP synthase produces ATP from ADP in the presence of a proton or sodium gradient. F-type ATPases consist of two structural domains, F(1) containing the extramembraneous catalytic core and F(0) containing the membrane proton channel, linked together by a central stalk and a peripheral stalk. During catalysis, ATP synthesis in the catalytic domain of F(1) is coupled via a rotary mechanism of the central stalk subunits to proton translocation. Component of the F(0) channel, it forms part of the peripheral stalk, linking F(1) to F(0). This chain is ATP synthase subunit b 1, found in Vibrio campbellii (strain ATCC BAA-1116).